The following is a 295-amino-acid chain: Small ribosomal subunit protein uS2 (295 aa).

This sequence belongs to the universal ribosomal protein uS2 family.

The sequence is that of Small ribosomal subunit protein uS2 from Rickettsia canadensis (strain McKiel).